A 165-amino-acid chain; its full sequence is Coronafacic acid dehydratase (165 aa).

Residue His-62 is part of the active site.

Belongs to the thioester dehydratase family.

The protein operates within phytotoxin biosynthesis; coronatine biosynthesis. This chain is Coronafacic acid dehydratase (cfa2), found in Pseudomonas savastanoi pv. glycinea (Pseudomonas syringae pv. glycinea).